The sequence spans 488 residues: Protein kinase C and casein kinase substrate in neurons 2 protein (488 aa).

Positions Val11–Asp282 constitute an F-BAR domain. The stretch at Lys25–Ile274 forms a coiled coil. Lys53 is modified (N6-acetyllysine). Positions Cys163–Ser176 are enriched in basic and acidic residues. A disordered region spans residues Cys163–Asn183. Position 273 is a phosphoserine (Ser273). The residue at position 315 (Ser315) is a Phosphoserine; by PKC. The segment at Arg316–Thr429 is disordered. Residues Thr329–Asn364 show a composition bias toward polar residues. The NPF1 motif lies at Asn364–Phe366. Ser375 is subject to Phosphoserine; by IKKB. A compositionally biased stretch (polar residues) spans Asn386–Tyr396. Ser401 is modified (phosphoserine). The span at Asn406–Ser418 shows a compositional bias: polar residues. Positions Asn407 to Phe409 match the NPF2 motif. An NPF3 motif is present at residues Asn419 to Phe421. The SH3 domain occupies Gly428–Gln488. Ser448 carries the phosphoserine modification.

Belongs to the PACSIN family. As to quaternary structure, homodimer. May form heterooligomers with other PACSINs. Interacts (via NPF motifs) with EHD1 (via EH domain). Interacts with EHD3. Interacts (via the SH3 domain) with MICALL1. Interacts with RAC1. Interacts (via SH3 domain) with DNM1, SYN1, SYNJ1 and WASL. Interacts with CAV1. Interacts with TRPV4. Forms a complex with EHD4 and MICALL1; the complex controls CDH5 trafficking and coordinates angiogenesis. Phosphorylated by casein kinase 2 (CK2) and protein kinase C (PKC). Phosphorylation by PKC probably decreases the membrane binding and tubulation capacities of PACSIN2, thereby modulating the lifetime of caveolae. Widely expressed (at protein level). Isoforms 1/3 are predominantly expressed in heart and in PC-12 cells, a pheochromocytoma cell line (at protein level). Isoforms 2/4 are widely expressed with highest levels in muscle, testis and brain (at protein level).

It is found in the cytoplasm. It localises to the cytoskeleton. Its subcellular location is the cytoplasmic vesicle membrane. The protein localises to the cell projection. The protein resides in the ruffle membrane. It is found in the early endosome. It localises to the recycling endosome membrane. Its subcellular location is the cell membrane. The protein localises to the membrane. The protein resides in the caveola. It is found in the cell junction. It localises to the adherens junction. Its function is as follows. Regulates the morphogenesis and endocytosis of caveolae. Lipid-binding protein that is able to promote the tubulation of the phosphatidic acid-containing membranes it preferentially binds. Plays a role in intracellular vesicle-mediated transport. Involved in the endocytosis of cell-surface receptors like the EGF receptor, contributing to its internalization in the absence of EGF stimulus. Facilitates endothelial front-rear polarity during migration by recruiting EHD4 and MICALL1 to asymmetric adherens junctions between leader and follower cells. The sequence is that of Protein kinase C and casein kinase substrate in neurons 2 protein (Pacsin2) from Rattus norvegicus (Rat).